Here is a 224-residue protein sequence, read N- to C-terminus: Charged multivesicular body protein 3 (224 aa).

A lipid anchor (N-myristoyl glycine) is attached at Gly-2. The intramolecular interaction with C-terminus stretch occupies residues 2–113 (GLFGKTQEKP…LQKSTEVMKA (112 aa)). Residues 22-54 (KIRKEMRVVDRQIRDIQREEEKVKRSVKDAAKK) are a coiled coil. 2 important for autoinhibitory function regions span residues 59–64 (VCVVLA) and 168–169 (IL). Positions 149-224 (ESMDDQEEME…MQSRLATLRS (76 aa)) form a coiled coil. Residues 151–222 (MDDQEEMEEA…EAMQSRLATL (72 aa)) are intramolecular interaction with N-terminus. Residues 151-224 (MDDQEEMEEA…MQSRLATLRS (74 aa)) form an interaction with VPS4A region. Lys-179 is covalently cross-linked (Glycyl lysine isopeptide (Lys-Gly) (interchain with G-Cter in ubiquitin)). The disordered stretch occupies residues 180 to 224 (APSKVTDALPEPEPAGAMAASEEGEEEEDEEDLEAMQSRLATLRS). Interaction with STAMBP regions lie at residues 196–224 (AMAA…TLRS), 205–209 (EEEDE), and 223–224 (RS). Ser-200 carries the post-translational modification Phosphoserine. Residues 201 to 213 (EEGEEEEDEEDLE) carry the MIT-interacting motif motif. The segment covering 201–213 (EEGEEEEDEEDLE) has biased composition (acidic residues).

The protein belongs to the SNF7 family. Probable core component of the endosomal sorting required for transport complex III (ESCRT-III). ESCRT-III components are thought to multimerize to form a flat lattice on the perimeter membrane of the endosome. Several assembly forms of ESCRT-III may exist that interact and act sequentially. Forms a metastable monomer in solution; its core structure (without part of the putative autoinhibitory C-terminal acidic region) oligomerizes into a flat lattice via two different dimerization interfaces. In vitro, heteromerizes with CHMP2A (but not CHMP4) to form helical tubular structures that expose membrane-interacting sites on the outside whereas VPS4B can associate on the inside of the tubule. May interact with IGFBP7; the relevance of such interaction however remains unclear. Interacts with CHMP2A. Interacts with CHMP4A; the interaction requires the release of CHMP4A autoinhibition. Interacts with VPS4A. Interacts with STAMBP; the interaction appears to relieve the autoinhibition of CHMP3. Interacts with VTA1. Expressed in lung, testis, heart, spleen, skeletal muscle, kidney, liver and brain.

It is found in the cytoplasm. The protein resides in the cytosol. It localises to the membrane. Its subcellular location is the endosome. The protein localises to the late endosome membrane. Functionally, probable core component of the endosomal sorting required for transport complex III (ESCRT-III) which is involved in multivesicular bodies (MVBs) formation and sorting of endosomal cargo proteins into MVBs. MVBs contain intraluminal vesicles (ILVs) that are generated by invagination and scission from the limiting membrane of the endosome and mostly are delivered to lysosomes enabling degradation of membrane proteins, such as stimulated growth factor receptors, lysosomal enzymes and lipids. The MVB pathway appears to require the sequential function of ESCRT-O, -I,-II and -III complexes. ESCRT-III proteins mostly dissociate from the invaginating membrane before the ILV is released. The ESCRT machinery also functions in topologically equivalent membrane fission events, such as the terminal stages of cytokinesis. ESCRT-III proteins are believed to mediate the necessary vesicle extrusion and/or membrane fission activities, possibly in conjunction with the AAA ATPase VPS4. Selectively binds to phosphatidylinositol 3,5-bisphosphate PtdIns(3,5)P2 and PtdIns(3,4)P2 in preference to other phosphoinositides tested. Involved in late stages of cytokinesis. Plays a role in endosomal sorting/trafficking of EGF receptor. In Mus musculus (Mouse), this protein is Charged multivesicular body protein 3 (Chmp3).